A 174-amino-acid polypeptide reads, in one-letter code: Trypsin inhibitor BvTI (174 aa).

Cystine bridges form between Cys41–Cys84 and Cys131–Cys138.

It belongs to the protease inhibitor I3 (leguminous Kunitz-type inhibitor) family.

It localises to the secreted. Its function is as follows. Inhibits bovine trypsin and chymotrypsin, and human plasmin, plasma kallikrein and factor XIIa. The polypeptide is Trypsin inhibitor BvTI (Bauhinia variegata (Purple orchid tree)).